Reading from the N-terminus, the 267-residue chain is MPPFATIPATERNSAAQHQDPSPMSQPFDLPALASSLADKSPQDILKAAFEHFGDELWISFSGAEDVVLVDMAWKLNRNVKVFSLDTGRLHPETYRFIDQVREHYGIAIDVLSPDPRLLEPLVKEKGLFSFYRDGHGECCGIRKIEPLKRKLAGVRAWATGQRRDQSPGTRSQVAVLEIDGAFSTPEKPLYKFNPLSSMTSEEVWGYIRMLELPYNSLHERGYISIGCEPCTRPVLPNQHEREGRWWWEEATHKECGLHAGNLISKA.

The segment at 1-29 (MPPFATIPATERNSAAQHQDPSPMSQPFD) is disordered. Positions 11 to 25 (ERNSAAQHQDPSPMS) are enriched in polar residues. Positions 139, 140, 228, and 231 each coordinate [4Fe-4S] cluster. Catalysis depends on Cys-256, which acts as the Nucleophile; cysteine thiosulfonate intermediate.

This sequence belongs to the PAPS reductase family. CysH subfamily. It depends on [4Fe-4S] cluster as a cofactor.

It is found in the cytoplasm. It catalyses the reaction [thioredoxin]-disulfide + sulfite + AMP + 2 H(+) = adenosine 5'-phosphosulfate + [thioredoxin]-dithiol. It functions in the pathway sulfur metabolism; hydrogen sulfide biosynthesis; sulfite from sulfate. Functionally, catalyzes the formation of sulfite from adenosine 5'-phosphosulfate (APS) using thioredoxin as an electron donor. This chain is Adenosine 5'-phosphosulfate reductase, found in Pseudomonas aeruginosa (strain LESB58).